The primary structure comprises 212 residues: Ribonuclease HII (212 aa).

An RNase H type-2 domain is found at 20–209 (TCIVGVDEVG…VHNILYQEAS (190 aa)). Residues Asp26, Glu27, and Asp117 each coordinate a divalent metal cation.

The protein belongs to the RNase HII family. The cofactor is Mn(2+). Requires Mg(2+) as cofactor.

The protein localises to the cytoplasm. The catalysed reaction is Endonucleolytic cleavage to 5'-phosphomonoester.. In terms of biological role, endonuclease that specifically degrades the RNA of RNA-DNA hybrids. The sequence is that of Ribonuclease HII from Cereibacter sphaeroides (strain ATCC 17025 / ATH 2.4.3) (Rhodobacter sphaeroides).